The sequence spans 264 residues: Methionine aminopeptidase (264 aa).

Residue His-79 coordinates substrate. Residues Asp-97, Asp-108, and His-171 each contribute to the a divalent metal cation site. His-178 is a binding site for substrate. 2 residues coordinate a divalent metal cation: Glu-204 and Glu-235.

It belongs to the peptidase M24A family. Methionine aminopeptidase type 1 subfamily. As to quaternary structure, monomer. The cofactor is Co(2+). Requires Zn(2+) as cofactor. Mn(2+) serves as cofactor. It depends on Fe(2+) as a cofactor.

The catalysed reaction is Release of N-terminal amino acids, preferentially methionine, from peptides and arylamides.. Removes the N-terminal methionine from nascent proteins. The N-terminal methionine is often cleaved when the second residue in the primary sequence is small and uncharged (Met-Ala-, Cys, Gly, Pro, Ser, Thr, or Val). Requires deformylation of the N(alpha)-formylated initiator methionine before it can be hydrolyzed. In Escherichia coli O157:H7, this protein is Methionine aminopeptidase.